A 115-amino-acid polypeptide reads, in one-letter code: Large ribosomal subunit protein bL19 (115 aa).

Belongs to the bacterial ribosomal protein bL19 family.

Functionally, this protein is located at the 30S-50S ribosomal subunit interface and may play a role in the structure and function of the aminoacyl-tRNA binding site. The polypeptide is Large ribosomal subunit protein bL19 (Pectobacterium atrosepticum (strain SCRI 1043 / ATCC BAA-672) (Erwinia carotovora subsp. atroseptica)).